The primary structure comprises 162 residues: MQHLVLIGFMGSGKSSLAQELGLALNLEVLDTDMIISERVGLSVRGIFEELGEDNFRMFEKNLIDELKMLKNPHVISTGGGIIMHDNFKGLGTTFYLKMDFETIIKRLSKKEREKRPLLNNLTQAKELFEKRQALYEKNASFIINAQGGLKKSLKQALQFIA.

ATP is bound at residue 11 to 16 (GSGKSS). Residue S15 participates in Mg(2+) binding. The substrate site is built by D33, R57, and G80. R116 serves as a coordination point for ATP. R132 provides a ligand contact to substrate.

This sequence belongs to the shikimate kinase family. Monomer. Mg(2+) is required as a cofactor.

The protein resides in the cytoplasm. It catalyses the reaction shikimate + ATP = 3-phosphoshikimate + ADP + H(+). It functions in the pathway metabolic intermediate biosynthesis; chorismate biosynthesis; chorismate from D-erythrose 4-phosphate and phosphoenolpyruvate: step 5/7. Catalyzes the specific phosphorylation of the 3-hydroxyl group of shikimic acid using ATP as a cosubstrate. The polypeptide is Shikimate kinase (Helicobacter acinonychis (strain Sheeba)).